Here is a 442-residue protein sequence, read N- to C-terminus: Trigger factor (442 aa).

Residues 176–259 (GDFISLSLYV…VNAVIEISSP (84 aa)) enclose the PPIase FKBP-type domain.

It belongs to the FKBP-type PPIase family. Tig subfamily.

The protein resides in the cytoplasm. It carries out the reaction [protein]-peptidylproline (omega=180) = [protein]-peptidylproline (omega=0). Functionally, involved in protein export. Acts as a chaperone by maintaining the newly synthesized protein in an open conformation. Functions as a peptidyl-prolyl cis-trans isomerase. The chain is Trigger factor from Chlamydia trachomatis serovar L2 (strain ATCC VR-902B / DSM 19102 / 434/Bu).